The following is a 138-amino-acid chain: Large ribosomal subunit protein uL16 (138 aa).

The segment covering 1–13 (MLQPKRRKYRKEQ) has biased composition (basic residues). Positions 1-24 (MLQPKRRKYRKEQKGRNTGKATRG) are disordered.

Belongs to the universal ribosomal protein uL16 family. In terms of assembly, part of the 50S ribosomal subunit.

In terms of biological role, binds 23S rRNA and is also seen to make contacts with the A and possibly P site tRNAs. This chain is Large ribosomal subunit protein uL16, found in Burkholderia multivorans (strain ATCC 17616 / 249).